The sequence spans 448 residues: tRNA wybutosine-synthesizing protein 2 homolog (448 aa).

S-adenosyl-L-methionine contacts are provided by residues S218, K225, E265, and 293–294 (DN).

Belongs to the class I-like SAM-binding methyltransferase superfamily. TRM5/TYW2 family.

The enzyme catalyses 4-demethylwyosine(37) in tRNA(Phe) + S-adenosyl-L-methionine = 4-demethyl-7-[(3S)-3-amino-3-carboxypropyl]wyosine(37) in tRNA(Phe) + S-methyl-5'-thioadenosine + H(+). It participates in tRNA modification; wybutosine-tRNA(Phe) biosynthesis. S-adenosyl-L-methionine-dependent transferase that acts as a component of the wybutosine biosynthesis pathway. Wybutosine is a hyper modified guanosine with a tricyclic base found at the 3'-position adjacent to the anticodon of eukaryotic phenylalanine tRNA. Catalyzes the transfer of the alpha-amino-alpha-carboxypropyl (acp) group from S-adenosyl-L-methionine to the C-7 position of 4-demethylwyosine (imG-14) to produce wybutosine-86. This Homo sapiens (Human) protein is tRNA wybutosine-synthesizing protein 2 homolog (TRMT12).